A 184-amino-acid polypeptide reads, in one-letter code: MAGEHVILLDEQDQPAGMLEKYAAHTLDTPLHLAFSCWLFNQQGQFLVTRRSLGKKAWPGVWTNSVCGHPQQGETFEQAVTRRCRFELGVEIADIAPIHPAFRYRAVAPNGIVENEVCPVYAARVVSQVQPNDDEVMDYQWVDLETMLSALAATPWAFSPWMVLEAENQDARQALIDFVARLRG.

Positions 25 and 32 each coordinate Mn(2+). Positions 30-164 (PLHLAFSCWL…PWAFSPWMVL (135 aa)) constitute a Nudix hydrolase domain. C67 is an active-site residue. Residue H69 coordinates Mn(2+). Mg(2+) is bound at residue E87. Mn(2+) contacts are provided by E114 and E116. E116 is an active-site residue.

The protein belongs to the IPP isomerase type 1 family. In terms of assembly, homodimer. Mg(2+) serves as cofactor. The cofactor is Mn(2+).

Its subcellular location is the cytoplasm. The enzyme catalyses isopentenyl diphosphate = dimethylallyl diphosphate. It participates in isoprenoid biosynthesis; dimethylallyl diphosphate biosynthesis; dimethylallyl diphosphate from isopentenyl diphosphate: step 1/1. In terms of biological role, catalyzes the 1,3-allylic rearrangement of the homoallylic substrate isopentenyl (IPP) to its highly electrophilic allylic isomer, dimethylallyl diphosphate (DMAPP). In Klebsiella pneumoniae (strain 342), this protein is Isopentenyl-diphosphate Delta-isomerase.